The chain runs to 571 residues: RUN and FYVE domain-containing protein 4 (571 aa).

The RUN domain maps to 33 to 166 (TDTSAELHRL…VAFELDLQQP (134 aa)). The interval 174–207 (MFSESRCSSSTQTQGRRPRKNKDAPKKIPAAYGG) is disordered. Residues 178-188 (SRCSSSTQTQG) show a composition bias toward polar residues. Residues 408–481 (EVSLQDEIKS…ERRDAMYQEE (74 aa)) adopt a coiled-coil conformation. The FYVE-type zinc finger occupies 474–567 (RDAMYQEELG…CCPPCAQGRE (94 aa)). Positions 521, 524, 537, 540, 545, 548, 559, and 562 each coordinate Zn(2+).

Forms homodimers (via coiled coil domain). Interacts with RAB7A. Forms a ternary complex with RAB7A and LAMP2; the interaction with RAB7A is mediated by RUFY4 (via RUN and coiled coil domains). Interacts with GTP-, but not GDP-bound ARL8A and ARL8B. Interacts with dynactin/DCTN1 and the dynein intermediate chain DYNC1I1/2.

The protein resides in the cytoplasmic vesicle. It is found in the autophagosome. Its subcellular location is the lysosome. Its function is as follows. ARL8 effector that promotes the coupling of endolysosomes to dynein-dynactin for retrograde transport along microtubules. Acts by binding both GTP-bound ARL8 and dynein-dynactin. In nonneuronal cells, promotes concentration of endolysosomes in the juxtanuclear area. In hippocampal neurons, drives retrograde transport of endolysosomes from the axon to the soma. Positive regulator of macroautophagy in dendritic cells. Increases autophagic flux, probably by stimulating both autophagosome formation and facilitating tethering with lysosomes. Binds to phosphatidylinositol 3-phosphate (PtdIns3P) through its FYVE-type zinc finger. Positive regulator of osteosclast bone-resorbing activity, possibly by promoting late endosome-lysosome fusion by acting as an adapter protein between RAB7A on late endosomes and LAMP2 on primary lysosomes. This Homo sapiens (Human) protein is RUN and FYVE domain-containing protein 4 (RUFY4).